The sequence spans 911 residues: Protein translocase subunit SecA (911 aa).

ATP is bound by residues Q86, 104-108, and D512; that span reads GEGKT. Positions 869–888 are disordered; the sequence is ALADDGQPQGAQPVRNVLPK. C895, C897, C906, and H907 together coordinate Zn(2+).

Belongs to the SecA family. Monomer and homodimer. Part of the essential Sec protein translocation apparatus which comprises SecA, SecYEG and auxiliary proteins SecDF-YajC and YidC. Requires Zn(2+) as cofactor.

The protein localises to the cell inner membrane. It is found in the cytoplasm. It carries out the reaction ATP + H2O + cellular proteinSide 1 = ADP + phosphate + cellular proteinSide 2.. Functionally, part of the Sec protein translocase complex. Interacts with the SecYEG preprotein conducting channel. Has a central role in coupling the hydrolysis of ATP to the transfer of proteins into and across the cell membrane, serving both as a receptor for the preprotein-SecB complex and as an ATP-driven molecular motor driving the stepwise translocation of polypeptide chains across the membrane. The chain is Protein translocase subunit SecA from Bordetella parapertussis (strain 12822 / ATCC BAA-587 / NCTC 13253).